Consider the following 175-residue polypeptide: uncharacterized protein (175 aa).

Disordered stretches follow at residues 68–112 and 153–175; these read NKNN…DQPY and PEKA…KLTT. The segment covering 94 to 105 has biased composition (low complexity); it reads DEQPMMPYQQPP.

This sequence belongs to the asfivirus H171R family.

The protein localises to the virion. This is an uncharacterized protein from African swine fever virus (isolate Tick/Malawi/Lil 20-1/1983) (ASFV).